Consider the following 363-residue polypeptide: Chalcone synthase B (363 aa).

Cys170 is a catalytic residue.

This sequence belongs to the thiolase-like superfamily. Chalcone/stilbene synthases family.

It carries out the reaction (E)-4-coumaroyl-CoA + 3 malonyl-CoA + 3 H(+) = 2',4,4',6'-tetrahydroxychalcone + 3 CO2 + 4 CoA. It participates in secondary metabolite biosynthesis; flavonoid biosynthesis. The primary product of this enzyme is 4,2',4',6'-tetrahydroxychalcone (also termed naringenin-chalcone or chalcone) which can under specific conditions spontaneously isomerize into naringenin. The polypeptide is Chalcone synthase B (CHSB) (Ipomoea nil (Japanese morning glory)).